Consider the following 198-residue polypeptide: NADH-quinone oxidoreductase subunit C (198 aa).

Belongs to the complex I 30 kDa subunit family. As to quaternary structure, NDH-1 is composed of 14 different subunits. Subunits NuoB, C, D, E, F, and G constitute the peripheral sector of the complex.

It is found in the cell inner membrane. The catalysed reaction is a quinone + NADH + 5 H(+)(in) = a quinol + NAD(+) + 4 H(+)(out). In terms of biological role, NDH-1 shuttles electrons from NADH, via FMN and iron-sulfur (Fe-S) centers, to quinones in the respiratory chain. The immediate electron acceptor for the enzyme in this species is believed to be ubiquinone. Couples the redox reaction to proton translocation (for every two electrons transferred, four hydrogen ions are translocated across the cytoplasmic membrane), and thus conserves the redox energy in a proton gradient. The chain is NADH-quinone oxidoreductase subunit C from Herminiimonas arsenicoxydans.